A 406-amino-acid polypeptide reads, in one-letter code: Cytochrome P450 165C4 (406 aa).

C356 contacts heme.

It belongs to the cytochrome P450 family. Requires heme as cofactor.

It participates in antibiotic biosynthesis; vancomycin biosynthesis. Involved in the coupling of aromatic side chains of the heptapeptide of vancomycin. The polypeptide is Cytochrome P450 165C4 (cyp165C4) (Amycolatopsis orientalis (Nocardia orientalis)).